The chain runs to 212 residues: Probable GTP-binding protein EngB (212 aa).

One can recognise an EngB-type G domain in the interval Ser38–Pro210. GTP contacts are provided by residues Gly46–Ser53, Gly73–Gln77, Asp91–Gly94, Thr158–Asp161, and Val189–Asn191. Mg(2+) is bound by residues Ser53 and Thr75.

This sequence belongs to the TRAFAC class TrmE-Era-EngA-EngB-Septin-like GTPase superfamily. EngB GTPase family. It depends on Mg(2+) as a cofactor.

Functionally, necessary for normal cell division and for the maintenance of normal septation. This chain is Probable GTP-binding protein EngB, found in Rickettsia africae (strain ESF-5).